A 425-amino-acid chain; its full sequence is UDP-N-acetyl-D-glucosamine 6-dehydrogenase (425 aa).

NAD(+) contacts are provided by V17, D35, R40, T86, and T121. C261 (nucleophile) is an active-site residue. R332 provides a ligand contact to NAD(+).

The protein belongs to the UDP-glucose/GDP-mannose dehydrogenase family. As to quaternary structure, homotrimer.

It catalyses the reaction UDP-N-acetyl-alpha-D-glucosamine + 2 NAD(+) + H2O = UDP-2-acetamido-2-deoxy-alpha-D-glucuronate + 2 NADH + 3 H(+). The protein operates within capsule biogenesis; capsule polysaccharide biosynthesis. It functions in the pathway glycan metabolism; Vi-antigen biosynthesis. Dehydrogenase required for the biosynthesis of the capsular polysaccharide, commonly referred as the Vi antigen, an important virulence factor. Catalyzes the conversion of UDP-N-acetylglucosamine (UDP-GlcNAc) to UDP-N-acetylglucosaminuronic acid (UDP-GlcNAcA). Cannot use UDP-GalNAc, UDP-Glc and UDP-Gal as substrates. The polypeptide is UDP-N-acetyl-D-glucosamine 6-dehydrogenase (Salmonella typhi).